Here is a 453-residue protein sequence, read N- to C-terminus: Phosphoglucosamine mutase (453 aa).

S102 (phosphoserine intermediate) is an active-site residue. 4 residues coordinate Mg(2+): S102, D244, D246, and D248. Residue S102 is modified to Phosphoserine.

This sequence belongs to the phosphohexose mutase family. The cofactor is Mg(2+). Activated by phosphorylation.

It carries out the reaction alpha-D-glucosamine 1-phosphate = D-glucosamine 6-phosphate. Functionally, catalyzes the conversion of glucosamine-6-phosphate to glucosamine-1-phosphate. The polypeptide is Phosphoglucosamine mutase (Pelobacter propionicus (strain DSM 2379 / NBRC 103807 / OttBd1)).